Reading from the N-terminus, the 216-residue chain is uncharacterized protein (216 aa).

The 4Fe-4S ferredoxin-type domain occupies 18–47 (PPDSPIEDRCGSCNICVDSCPTGALVQGGQ). Residues Cys27, Cys30, Cys33, Cys37, Cys79, Cys82, and Cys86 each coordinate [4Fe-4S] cluster.

This is an uncharacterized protein from Geobacillus stearothermophilus (Bacillus stearothermophilus).